A 344-amino-acid chain; its full sequence is MWESICLTLAATAGNNIGKVLQKKGTIILPPLSLKLKVLRAYAENKPWALGFLMDIVGALLMLRALSLAPVSVVQPVSGCGLAILSVFSHFYLKEVMNVFDWIGITVAGIGTIGVGAGGEEQEASLISVFQLLWLALVVAILFVLLNAWLHIFKRQRREQELGEYEVVEEIIYGLESGILFGMASVVSKMGFVFVEQGFSTMFIPMCISISICCSGTGFFYQTRGLKHGRAIVVSTCAAVASIVTGVVAGMFALGEKLPTSPSGRLLLLLGWLLIMLGVVLLVTSSRLIRHLPRSFRRSRQTSLERGFNIRRTTSHTPKDTNPSAVIQAATLHHLLSSPSKDKD.

Over 1 to 46 (MWESICLTLAATAGNNIGKVLQKKGTIILPPLSLKLKVLRAYAENK) the chain is Cytoplasmic. 2 helical membrane passes run 47-67 (PWALGFLMDIVGALLMLRALS) and 68-88 (LAPVSVVQPVSGCGLAILSVF). The Cytoplasmic segment spans residues 89–98 (SHFYLKEVMN). The helical transmembrane segment at 99 to 119 (VFDWIGITVAGIGTIGVGAGG) threads the bilayer. The Extracellular portion of the chain corresponds to 120 to 125 (EEQEAS). The helical transmembrane segment at 126–146 (LISVFQLLWLALVVAILFVLL) threads the bilayer. Over 147-166 (NAWLHIFKRQRREQELGEYE) the chain is Cytoplasmic. A helical transmembrane segment spans residues 167 to 187 (VVEEIIYGLESGILFGMASVV). Over 188 to 191 (SKMG) the chain is Extracellular. Residues 192 to 212 (FVFVEQGFSTMFIPMCISISI) form a helical membrane-spanning segment. Residues 213-231 (CCSGTGFFYQTRGLKHGRA) lie on the Cytoplasmic side of the membrane. The helical transmembrane segment at 232–252 (IVVSTCAAVASIVTGVVAGMF) threads the bilayer. Over 253 to 265 (ALGEKLPTSPSGR) the chain is Extracellular. The helical transmembrane segment at 266–286 (LLLLLGWLLIMLGVVLLVTSS) threads the bilayer. Residues 287–344 (RLIRHLPRSFRRSRQTSLERGFNIRRTTSHTPKDTNPSAVIQAATLHHLLSSPSKDKD) lie on the Cytoplasmic side of the membrane.

The protein belongs to the NIPA (TC 2.A.7) family. In terms of assembly, homodimer.

Its subcellular location is the cell membrane. The protein resides in the early endosome. Functionally, acts as a Mg(2+) transporter. Can also transport other divalent cations such as Fe(2+), Sr(2+), Ba(2+), Mn(2+) and Co(2+) but to a much less extent than Mg(2+). In Arabidopsis thaliana (Mouse-ear cress), this protein is Probable magnesium transporter NIPA9.